The sequence spans 629 residues: tRNA uridine 5-carboxymethylaminomethyl modification enzyme MnmG (629 aa).

Residues 13–18 (GGGHAG), Val125, and Ser180 each bind FAD. Position 273–287 (273–287 (GPRYCPSIEDKVMRF)) interacts with NAD(+). Gln370 serves as a coordination point for FAD.

This sequence belongs to the MnmG family. Homodimer. Heterotetramer of two MnmE and two MnmG subunits. Requires FAD as cofactor.

It localises to the cytoplasm. Functionally, NAD-binding protein involved in the addition of a carboxymethylaminomethyl (cmnm) group at the wobble position (U34) of certain tRNAs, forming tRNA-cmnm(5)s(2)U34. This chain is tRNA uridine 5-carboxymethylaminomethyl modification enzyme MnmG, found in Salmonella paratyphi C (strain RKS4594).